Here is an 85-residue protein sequence, read N- to C-terminus: Large ribosomal subunit protein bL27 (85 aa).

Residues 1 to 23 (MAHKKGQGSTQNNRDSAGRRLGV) are disordered.

The protein belongs to the bacterial ribosomal protein bL27 family.

The polypeptide is Large ribosomal subunit protein bL27 (Helicobacter hepaticus (strain ATCC 51449 / 3B1)).